A 137-amino-acid chain; its full sequence is Small ribosomal subunit protein uS12 (137 aa).

The tract at residues 1-28 is disordered; that stretch reads MPTINQLVRKPRKSKAKKSDSPALNKGF. A 3-methylthioaspartic acid modification is found at Asp102.

This sequence belongs to the universal ribosomal protein uS12 family. Part of the 30S ribosomal subunit. Contacts proteins S8 and S17. May interact with IF1 in the 30S initiation complex.

With S4 and S5 plays an important role in translational accuracy. In terms of biological role, interacts with and stabilizes bases of the 16S rRNA that are involved in tRNA selection in the A site and with the mRNA backbone. Located at the interface of the 30S and 50S subunits, it traverses the body of the 30S subunit contacting proteins on the other side and probably holding the rRNA structure together. The combined cluster of proteins S8, S12 and S17 appears to hold together the shoulder and platform of the 30S subunit. The protein is Small ribosomal subunit protein uS12 of Staphylococcus carnosus (strain TM300).